The following is a 116-amino-acid chain: NADH-ubiquinone oxidoreductase chain 3 (116 aa).

Transmembrane regions (helical) follow at residues 3-23 (LVTTIITITITLSAVLATISF), 56-76 (FFLIAILFLLFDLEIALLLPL), and 84-104 (APTLTLLWSTAVLALLTLGLI).

This sequence belongs to the complex I subunit 3 family.

The protein resides in the mitochondrion membrane. It carries out the reaction a ubiquinone + NADH + 5 H(+)(in) = a ubiquinol + NAD(+) + 4 H(+)(out). Its function is as follows. Core subunit of the mitochondrial membrane respiratory chain NADH dehydrogenase (Complex I) that is believed to belong to the minimal assembly required for catalysis. Complex I functions in the transfer of electrons from NADH to the respiratory chain. The immediate electron acceptor for the enzyme is believed to be ubiquinone. This is NADH-ubiquinone oxidoreductase chain 3 (MT-ND3) from Oncorhynchus nerka (Sockeye salmon).